Consider the following 67-residue polypeptide: Putative ATP synthase subunit epsilon, mitochondrial (67 aa).

Belongs to the eukaryotic ATPase epsilon family. In terms of assembly, F-type ATPases have 2 components, CF(1) - the catalytic core - and CF(0) - the membrane proton channel. CF(1) has five subunits: alpha(3), beta(3), gamma(1), delta(1), epsilon(1). CF(0) seems to have nine subunits: a, b, c, d, e, f, g, F6 and 8 (or A6L).

Its subcellular location is the mitochondrion. The protein localises to the mitochondrion inner membrane. Its function is as follows. Mitochondrial membrane ATP synthase (F(1)F(0) ATP synthase or Complex V) produces ATP from ADP in the presence of a proton gradient across the membrane which is generated by electron transport complexes of the respiratory chain. F-type ATPases consist of two structural domains, F(1) - containing the extramembraneous catalytic core, and F(0) - containing the membrane proton channel, linked together by a central stalk and a peripheral stalk. During catalysis, ATP synthesis in the catalytic domain of F(1) is coupled via a rotary mechanism of the central stalk subunits to proton translocation. Part of the complex F(1) domain and of the central stalk which is part of the complex rotary element. Rotation of the central stalk against the surrounding alpha(3)beta(3) subunits leads to hydrolysis of ATP in three separate catalytic sites on the beta subunits. The protein is Putative ATP synthase subunit epsilon, mitochondrial (atp15) of Schizosaccharomyces pombe (strain 972 / ATCC 24843) (Fission yeast).